Here is an 83-residue protein sequence, read N- to C-terminus: Mu-theraphotoxin-Hhn2b 1 (83 aa).

An N-terminal signal peptide occupies residues 1–21 (MKASMFLALAGLVLLFVVCYA). A propeptide spanning residues 22-48 (SESEEKEFPRELISKIFAVDDFKGEER) is cleaved from the precursor. 3 disulfides stabilise this stretch: Cys50-Cys65, Cys57-Cys70, and Cys64-Cys77. Residue Leu81 is modified to Leucine amide.

Belongs to the neurotoxin 10 (Hwtx-1) family. 14 (Hntx-1) subfamily. As to quaternary structure, monomer. In terms of tissue distribution, expressed by the venom gland.

It localises to the secreted. In terms of biological role, weakly blocks the rat SCN2A/SCN1B (Nav1.2/beta-1) sodium channel (IC(50)=68 uM) and the insect sodium channel para/tipE (IC(50)=4.3 uM), without altering the activation or inactivation kinetics (depressant toxin). In Cyriopagopus hainanus (Chinese bird spider), this protein is Mu-theraphotoxin-Hhn2b 1.